The primary structure comprises 136 residues: Interleukin-13 (136 aa).

The N-terminal stretch at 1–18 (MALWLTVVIAFTCIGGLA) is a signal peptide. Residues asparagine 38, asparagine 49, asparagine 57, asparagine 72, asparagine 75, and asparagine 131 are each glycosylated (N-linked (GlcNAc...) asparagine). 2 cysteine pairs are disulfide-bonded: cysteine 48-cysteine 76 and cysteine 64-cysteine 90.

It belongs to the IL-4/IL-13 family. As to quaternary structure, interacts with IL13RA2.

It is found in the secreted. Functionally, cytokine that plays important roles in allergic inflammation and immune response to parasite infection. Synergizes with IL2 in regulating interferon-gamma synthesis. Stimulates B-cell proliferation, and activation of eosinophils, basophils, and mast cells. Plays an important role in controlling IL33 activity by modulating the production of transmembrane and soluble forms of interleukin-1 receptor-like 1/IL1RL1. Displays the capacity to antagonize Th1-driven proinflammatory immune response and downregulates synthesis of many proinflammatory cytokines including IL1, IL6, IL10, IL12 and TNF-alpha through a mechanism that partially involves suppression of NF-kappa-B. Also functions on nonhematopoietic cells, including endothelial cells where it induces vascular cell adhesion protein 1/VCAM1, which is important in the recruitment of eosinophils. Exerts its biological effects through its receptors which comprises the IL4R chain and the IL13RA1 chain, to activate JAK1 and TYK2, leading to the activation of STAT6. Aside from IL13RA1, another receptor IL13RA2 acts as a high affinity decoy for IL13 and mediates internalization and depletion of extracellular IL13. In Camelus bactrianus (Bactrian camel), this protein is Interleukin-13 (IL13).